Consider the following 375-residue polypeptide: Period circadian protein (375 aa).

3 disordered regions span residues 27–119 (VTAP…VPPV), 140–189 (KHRE…WEGE), and 219–255 (KCQASGAGGGGSGSVGGTGNIGSGGSNAQPSTNQYTQ). The span at 69–91 (SGNFTTGSNLHMSSVTNTSNAGT) shows a compositional bias: low complexity. Over residues 92-113 (GTSGTGNSGGGGGGGGGAGPGN) the composition is skewed to gly residues. Over residues 145-156 (RGRSGEKNKKSA) the composition is skewed to basic and acidic residues. Residues 224–243 (GAGGGGSGSVGGTGNIGSGG) are compositionally biased toward gly residues. Positions 245 to 255 (NAQPSTNQYTQ) are enriched in polar residues.

In terms of assembly, forms a heterodimer with timeless (TIM); the complex then translocates into the nucleus. Phosphorylated with a circadian rhythmicity, probably by the double-time protein (dbt). Phosphorylation could be implicated in the stability of per monomer and in the formation of heterodimer per-tim.

It is found in the nucleus. It localises to the cytoplasm. The protein localises to the perinuclear region. Its function is as follows. Essential for biological clock functions. Determines the period length of circadian and ultradian rhythms; an increase in PER dosage leads to shortened circadian rhythms and a decrease leads to lengthened circadian rhythms. Essential for the circadian rhythmicity of locomotor activity, eclosion behavior, and for the rhythmic component of the male courtship song that originates in the thoracic nervous system. The biological cycle depends on the rhythmic formation and nuclear localization of the TIM-PER complex. Light induces the degradation of TIM, which promotes elimination of PER. Nuclear activity of the heterodimer coordinatively regulates PER and TIM transcription through a negative feedback loop. Behaves as a negative element in circadian transcriptional loop. Does not appear to bind DNA, suggesting indirect transcriptional inhibition. In Drosophila sucinea (Fruit fly), this protein is Period circadian protein (per).